The primary structure comprises 130 residues: Capsid protein (130 aa).

Residues 32-105 are viral RNA-binding; that stretch reads EWISSNSRSQ…FATNSDCELI (74 aa).

Belongs to the Leviviricetes capsid protein family. Homodimer. The capsid proteins form dimers that assemble by group of 5. Twelve such pentamers are linked together with free dimers. The homodimers binds to the viral RNA via an operator hairpin, but also to many other RNA sequences in the viral genome; this interaction probably shifts the virus from the replicative to the assembly phase and ensures specific encapsidation of the viral genome.

Its subcellular location is the virion. Functionally, capsid protein self-assembles to form an icosahedral capsid with a T=3 symmetry, about 26 nm in diameter, and consisting of 89 capsid proteins dimers (178 capsid proteins). Involved in viral genome encapsidation through the interaction between a capsid protein dimer and the multiple packaging signals present in the RNA genome. The capsid also contains 1 copy of the A2 maturation protein. Its function is as follows. Acts as a translational repressor of viral replicase synthesis late in infection. This latter function is the result of capsid protein interaction with an RNA hairpin which contains the replicase ribosome-binding site. This chain is Capsid protein, found in Enterobacteria phage ZR (Bacteriophage ZR).